The following is a 94-amino-acid chain: Co-chaperonin GroES (94 aa).

The protein belongs to the GroES chaperonin family. Heptamer of 7 subunits arranged in a ring. Interacts with the chaperonin GroEL.

Its subcellular location is the cytoplasm. Its function is as follows. Together with the chaperonin GroEL, plays an essential role in assisting protein folding. The GroEL-GroES system forms a nano-cage that allows encapsulation of the non-native substrate proteins and provides a physical environment optimized to promote and accelerate protein folding. GroES binds to the apical surface of the GroEL ring, thereby capping the opening of the GroEL channel. The polypeptide is Co-chaperonin GroES (Alkaliphilus metalliredigens (strain QYMF)).